The following is a 568-amino-acid chain: Potassium-transporting ATPase potassium-binding subunit (568 aa).

10 helical membrane passes run 7–27 (AEIA…GLFL), 65–85 (SYAL…YAIL), 135–155 (AGLT…AAAV), 177–197 (VSLY…VALG), 254–274 (LTNL…VVAF), 286–306 (ALIT…YWTE), 383–403 (GLYG…LMVG), 422–442 (MLAV…AAVL), 489–509 (LGIA…AIAG), and 530–550 (LFIG…FFPA).

The protein belongs to the KdpA family. The system is composed of three essential subunits: KdpA, KdpB and KdpC.

The protein localises to the cell inner membrane. Its function is as follows. Part of the high-affinity ATP-driven potassium transport (or Kdp) system, which catalyzes the hydrolysis of ATP coupled with the electrogenic transport of potassium into the cytoplasm. This subunit binds the periplasmic potassium ions and delivers the ions to the membrane domain of KdpB through an intramembrane tunnel. The chain is Potassium-transporting ATPase potassium-binding subunit from Beijerinckia indica subsp. indica (strain ATCC 9039 / DSM 1715 / NCIMB 8712).